A 245-amino-acid polypeptide reads, in one-letter code: Uridylate kinase (245 aa).

An ATP-binding site is contributed by 12 to 15 (KISG). G55 provides a ligand contact to UMP. 2 residues coordinate ATP: G56 and R60. UMP contacts are provided by residues D76 and 137–144 (AGAPYLTT). Positions 164, 171, and 174 each coordinate ATP.

Belongs to the UMP kinase family. As to quaternary structure, homohexamer.

The protein resides in the cytoplasm. The enzyme catalyses UMP + ATP = UDP + ADP. The protein operates within pyrimidine metabolism; CTP biosynthesis via de novo pathway; UDP from UMP (UMPK route): step 1/1. Its activity is regulated as follows. Inhibited by UTP. Its function is as follows. Catalyzes the reversible phosphorylation of UMP to UDP. This Chlamydia muridarum (strain MoPn / Nigg) protein is Uridylate kinase.